Here is a 391-residue protein sequence, read N- to C-terminus: Cyclin-B1-2 (391 aa).

It belongs to the cyclin family. Cyclin AB subfamily.

The sequence is that of Cyclin-B1-2 (CYCB1-2) from Oryza sativa subsp. japonica (Rice).